A 332-amino-acid polypeptide reads, in one-letter code: Solute carrier family 25 member 16 (332 aa).

3 Solcar repeats span residues 34–120, 128–216, and 238–328; these read FYWL…YKTF, SGHV…LKSV, and LKTH…MKQF. Transmembrane regions (helical) follow at residues 37–57, 88–108, 134–154, 191–211, 244–264, and 299–319; these read LRSFLAGGIAGCCAKTTVAPL, GYLGLYKGNGAMMIRIFPYGA, LMAGSMAGMTAVICTYPLDVV, GLMPTILGMAPYAGVSFFTFG, LLCGGVAGAIAQTISYPFDVT, and GLYRGLSLNYIRCIPSQAVAF.

This sequence belongs to the mitochondrial carrier (TC 2.A.29) family.

The protein localises to the mitochondrion inner membrane. May be involved in the transport of coenzyme A in the mitochondrial matrix. Very little is known about the physiological function of this carrier. The chain is Solute carrier family 25 member 16 from Mus musculus (Mouse).